Here is a 907-residue protein sequence, read N- to C-terminus: Leucine-rich repeat-containing G-protein coupled receptor 5 (907 aa).

An N-terminal signal peptide occupies residues 1–21 (MDTSRLGVLLSLPVLLQLATG). Topologically, residues 22–561 (GSSPRSGVLL…EHLLDGWLIR (540 aa)) are extracellular. The 42-residue stretch at 25–66 (PRSGVLLRGCPTHCHCEPDGRMLLRVDCSDLGLSELPSNLSV) folds into the LRRNT domain. Intrachain disulfides connect cysteine 34–cysteine 40 and cysteine 38–cysteine 52. N-linked (GlcNAc...) asparagine glycosylation is found at asparagine 63 and asparagine 77. 16 LRR repeats span residues 67 to 90 (FTSY…PSLR), 91 to 112 (FLEE…AFTG), 115 to 136 (SLKV…ALQN), 139 to 160 (SLQS…CFSG), 163 to 184 (SLRH…AFRS), 187 to 208 (ALQA…AFGN), 211 to 232 (SLVV…CFDG), 235 to 256 (SLET…IRTL), 258 to 279 (NLKE…AFVG), 282 to 303 (SLIT…AFQH), 306 to 328 (ELRT…TGTA), 329 to 350 (NLES…VCNQ), 353 to 374 (NLQV…SVCQ), 375 to 396 (KLQK…TFQQ), 399 to 420 (SLRS…AFST), and 423 to 446 (SLIK…HGLT). N-linked (GlcNAc...) asparagine glycosylation is present at asparagine 208. A disulfide bridge links cysteine 348 with cysteine 373. Cysteines 479 and 541 form a disulfide. Asparagine 500 is a glycosylation site (N-linked (GlcNAc...) asparagine). A helical transmembrane segment spans residues 562-582 (IGVWTIAVLALTCNALVTSTV). Residues 583–593 (FRSPLYISPIK) are Cytoplasmic-facing. Residues 594–614 (LLIGVIAAVNMLTGVSSAVLA) traverse the membrane as a helical segment. Over 615-638 (GVDAFTFGSFARHGAWWENGVGCH) the chain is Extracellular. Cysteine 637 and cysteine 712 are joined by a disulfide. Residues 639–659 (VIGFLSIFASESSVFLLTLAA) traverse the membrane as a helical segment. The Cytoplasmic segment spans residues 660-682 (LERGFSVKYSAKFETKAPFSSLK). The chain crosses the membrane as a helical span at residues 683 to 703 (VIILLCALLALTMAAVPLLGG). Residues 704-722 (SKYGASPLCLPLPFGEPST) are Extracellular-facing. The chain crosses the membrane as a helical span at residues 723–743 (MGYMVALILLNSLCFLMMTIA). Residues 744–767 (YTKLYCNLDKGDLENIWDCSMVKH) are Cytoplasmic-facing. Residues 768–788 (IALLLFTNCILNCPVAFLSFS) form a helical membrane-spanning segment. Residues 789–802 (SLINLTFISPEVIK) lie on the Extracellular side of the membrane. N-linked (GlcNAc...) asparagine glycosylation is present at asparagine 792. The chain crosses the membrane as a helical span at residues 803-823 (FILLVVVPLPACLNPLLYILF). Topologically, residues 824 to 907 (NPHFKEDLVS…LSSVAFVPCL (84 aa)) are cytoplasmic.

It belongs to the G-protein coupled receptor 1 family. As to quaternary structure, identified in a complex composed of RNF43, LGR5 and RSPO1. Also interacts with other R-spondin ligands, including RSPO2, RSPO3 and RSPO4. Expressed in skeletal muscle, placenta, spinal cord, and various region of brain. Expressed at the base of crypts in colonic and small mucosa stem cells. In premalignant cancer expression is not restricted to the cript base. Overexpressed in cancers of the ovary, colon and liver.

It is found in the cell membrane. The protein localises to the golgi apparatus. Its subcellular location is the trans-Golgi network membrane. Receptor for R-spondins that potentiates the canonical Wnt signaling pathway and acts as a stem cell marker of the intestinal epithelium and the hair follicle. Upon binding to R-spondins (RSPO1, RSPO2, RSPO3 or RSPO4), associates with phosphorylated LRP6 and frizzled receptors that are activated by extracellular Wnt receptors, triggering the canonical Wnt signaling pathway to increase expression of target genes. In contrast to classical G-protein coupled receptors, does not activate heterotrimeric G-proteins to transduce the signal. Involved in the development and/or maintenance of the adult intestinal stem cells during postembryonic development. The polypeptide is Leucine-rich repeat-containing G-protein coupled receptor 5 (LGR5) (Homo sapiens (Human)).